Here is a 598-residue protein sequence, read N- to C-terminus: Phenylalanine--tRNA ligase beta subunit, cytoplasmic (598 aa).

The B5 domain occupies 303-383 (LAVYDMEVPL…IAYGFNNIPT (81 aa)). 4 residues coordinate Mg(2+): D361, D367, E370, and D371.

The protein belongs to the phenylalanyl-tRNA synthetase beta subunit family. Type 2 subfamily. In terms of assembly, tetramer of two alpha and two beta subunits. The cofactor is Mg(2+).

It localises to the cytoplasm. It is found in the cytosol. The catalysed reaction is tRNA(Phe) + L-phenylalanine + ATP = L-phenylalanyl-tRNA(Phe) + AMP + diphosphate + H(+). This chain is Phenylalanine--tRNA ligase beta subunit, cytoplasmic, found in Arabidopsis thaliana (Mouse-ear cress).